The sequence spans 152 residues: Ribosome maturation factor RimP (152 aa).

Belongs to the RimP family.

It is found in the cytoplasm. Required for maturation of 30S ribosomal subunits. The polypeptide is Ribosome maturation factor RimP (Salmonella arizonae (strain ATCC BAA-731 / CDC346-86 / RSK2980)).